Consider the following 501-residue polypeptide: Membrane-bound lytic murein transglycosylase F (501 aa).

The first 29 residues, 1 to 29 (MTKILLNTASTVLTRLWKLSLLGLVFAVA), serve as a signal peptide directing secretion. A non-LT domain region spans residues 30–274 (AATLVSSRIP…DAMETFYGHL (245 aa)). The interval 275–501 (GEIDYSGAIL…VKSISGTSSL (227 aa)) is LT domain. Glu321 is an active-site residue.

In the N-terminal section; belongs to the bacterial solute-binding protein 3 family. This sequence in the C-terminal section; belongs to the transglycosylase Slt family.

The protein resides in the cell outer membrane. It carries out the reaction Exolytic cleavage of the (1-&gt;4)-beta-glycosidic linkage between N-acetylmuramic acid (MurNAc) and N-acetylglucosamine (GlcNAc) residues in peptidoglycan, from either the reducing or the non-reducing ends of the peptidoglycan chains, with concomitant formation of a 1,6-anhydrobond in the MurNAc residue.. Functionally, murein-degrading enzyme that degrades murein glycan strands and insoluble, high-molecular weight murein sacculi, with the concomitant formation of a 1,6-anhydromuramoyl product. Lytic transglycosylases (LTs) play an integral role in the metabolism of the peptidoglycan (PG) sacculus. Their lytic action creates space within the PG sacculus to allow for its expansion as well as for the insertion of various structures such as secretion systems and flagella. In Saccharophagus degradans (strain 2-40 / ATCC 43961 / DSM 17024), this protein is Membrane-bound lytic murein transglycosylase F.